The sequence spans 218 residues: Protein-L-isoaspartate O-methyltransferase (218 aa).

Serine 60 is an active-site residue.

Belongs to the methyltransferase superfamily. L-isoaspartyl/D-aspartyl protein methyltransferase family.

The protein resides in the cytoplasm. The catalysed reaction is [protein]-L-isoaspartate + S-adenosyl-L-methionine = [protein]-L-isoaspartate alpha-methyl ester + S-adenosyl-L-homocysteine. Catalyzes the methyl esterification of L-isoaspartyl residues in peptides and proteins that result from spontaneous decomposition of normal L-aspartyl and L-asparaginyl residues. It plays a role in the repair and/or degradation of damaged proteins. The sequence is that of Protein-L-isoaspartate O-methyltransferase from Roseiflexus sp. (strain RS-1).